The primary structure comprises 123 residues: Large ribosomal subunit protein uL29x (123 aa).

Belongs to the universal ribosomal protein uL29 family.

This chain is Large ribosomal subunit protein uL29x (RPL35C), found in Arabidopsis thaliana (Mouse-ear cress).